A 76-amino-acid polypeptide reads, in one-letter code: Transcription modulator YdgT (76 aa).

The protein belongs to the Hha/YmoA/Cnu family.

In terms of biological role, binds to H-NS and modifies the range of genes it silences; H-NS alone silences 'core' genes while the H-NS-Hha complex (and presumably also H-NS-YdgT) silences genes acquired by horizontal gene transfer. Plays a role silencing virulence factors in the absence of factors that induce pathogenicity. This is Transcription modulator YdgT (ydgT) from Salmonella typhimurium (strain SL1344).